We begin with the raw amino-acid sequence, 77 residues long: Small ribosomal subunit protein bS20 (77 aa).

It belongs to the bacterial ribosomal protein bS20 family.

Functionally, binds directly to 16S ribosomal RNA. In Streptococcus agalactiae serotype Ia (strain ATCC 27591 / A909 / CDC SS700), this protein is Small ribosomal subunit protein bS20.